The sequence spans 124 residues: Large ribosomal subunit protein bL12 (124 aa).

The protein belongs to the bacterial ribosomal protein bL12 family. In terms of assembly, homodimer. Part of the ribosomal stalk of the 50S ribosomal subunit. Forms a multimeric L10(L12)X complex, where L10 forms an elongated spine to which 2 to 4 L12 dimers bind in a sequential fashion. Binds GTP-bound translation factors.

Functionally, forms part of the ribosomal stalk which helps the ribosome interact with GTP-bound translation factors. Is thus essential for accurate translation. The chain is Large ribosomal subunit protein bL12 from Cereibacter sphaeroides (strain ATCC 17025 / ATH 2.4.3) (Rhodobacter sphaeroides).